Reading from the N-terminus, the 112-residue chain is Ribonuclease P protein component (112 aa).

It belongs to the RnpA family. In terms of assembly, consists of a catalytic RNA component (M1 or rnpB) and a protein subunit.

It catalyses the reaction Endonucleolytic cleavage of RNA, removing 5'-extranucleotides from tRNA precursor.. Functionally, RNaseP catalyzes the removal of the 5'-leader sequence from pre-tRNA to produce the mature 5'-terminus. It can also cleave other RNA substrates such as 4.5S RNA. The protein component plays an auxiliary but essential role in vivo by binding to the 5'-leader sequence and broadening the substrate specificity of the ribozyme. This chain is Ribonuclease P protein component, found in Mycoplasma mobile (strain ATCC 43663 / 163K / NCTC 11711) (Mesomycoplasma mobile).